A 302-amino-acid chain; its full sequence is MQALLTEILDEVRPLIGQGKVADYIPALAGVVPDQLGIAVYGNDGQLHVAGDARTPFSIQSISKVFSLVQAIGHSGEAIWQRLGHEPSGQPFNSLVQLEFERGKPRNPFINAGALVICDINQSRYAAPALSMRDFVRRLSGNPEVTVDNHVAESEYQHRARNAAAAYLMQSFGNFHNEVEAVLRSYFSCCALRMSCVDLARAFGFLANQGFCQHSGEQILSPRQSKQINAIMATSGLYDEAGNFAYRVGLPGKSGVGGGIVAVVPGQFSVCVWSPELNAAGNSLTGIKALELLSERIGWSVF.

Residues S61, N111, E155, N162, Y186, Y238, and V256 each coordinate substrate.

The protein belongs to the glutaminase family. As to quaternary structure, homotetramer.

The enzyme catalyses L-glutamine + H2O = L-glutamate + NH4(+). This is Glutaminase from Ectopseudomonas mendocina (strain ymp) (Pseudomonas mendocina).